Here is a 354-residue protein sequence, read N- to C-terminus: 40 kDa protein (354 aa).

Interacts with capsid protein; this interaction may play a role in vector transmission of the virus.

Functionally, involved in transmission of the virus by the vector nematode Paratrichodorus pachydermus. The chain is 40 kDa protein from Bidens pilosa (Hairy beggarticks).